The primary structure comprises 311 residues: Ribosomal protein L11 methyltransferase (311 aa).

Threonine 162, glycine 183, aspartate 205, and asparagine 248 together coordinate S-adenosyl-L-methionine.

This sequence belongs to the methyltransferase superfamily. PrmA family.

Its subcellular location is the cytoplasm. The enzyme catalyses L-lysyl-[protein] + 3 S-adenosyl-L-methionine = N(6),N(6),N(6)-trimethyl-L-lysyl-[protein] + 3 S-adenosyl-L-homocysteine + 3 H(+). Functionally, methylates ribosomal protein L11. This Bacillus pumilus (strain SAFR-032) protein is Ribosomal protein L11 methyltransferase.